We begin with the raw amino-acid sequence, 437 residues long: Glutamate-1-semialdehyde 2,1-aminomutase (437 aa).

Lysine 273 is subject to N6-(pyridoxal phosphate)lysine.

This sequence belongs to the class-III pyridoxal-phosphate-dependent aminotransferase family. HemL subfamily. In terms of assembly, homodimer. Pyridoxal 5'-phosphate serves as cofactor.

Its subcellular location is the cytoplasm. It catalyses the reaction (S)-4-amino-5-oxopentanoate = 5-aminolevulinate. Its pathway is porphyrin-containing compound metabolism; protoporphyrin-IX biosynthesis; 5-aminolevulinate from L-glutamyl-tRNA(Glu): step 2/2. The chain is Glutamate-1-semialdehyde 2,1-aminomutase from Chlamydia felis (strain Fe/C-56) (Chlamydophila felis).